The chain runs to 174 residues: Regenerating islet-derived protein 3-gamma (174 aa).

An N-terminal signal peptide occupies residues 1-26 (MLPRITITIMSWMLLSCLMLLSQVQG). A propeptide spanning residues 27–37 (EVAKKDAPSSR) is cleaved from the precursor. Cystine bridges form between Cys-40-Cys-51, Cys-68-Cys-170, and Cys-145-Cys-162. The 125-residue stretch at 47–171 (YGSYCYALFS…CNLELPYVCK (125 aa)) folds into the C-type lectin domain. Positions 103–118 (WIGLHDPTLGYEPNRG) are sufficient to activate EXTL3. His-107 contacts Zn(2+). An EPN motif is present at residues 114-116 (EPN). Glu-121 and His-144 together coordinate Zn(2+).

In terms of assembly, forms a hexameric membrane-permeabilizing oligomeric pore on membrane phospholipids. The hexamer is formed by three dimers related by helical symmetry. Forms filaments, filamentation traps pore complexes and limits damage to host cells. Interacts with EXTL3. In terms of processing, proteolytic processing by trypsin removes an inhibitory N-terminal propeptide and is essential for peptidoglycan binding and antibacterial activity. As to expression, predominantly expressed in the small intestine, including Paneth cells (at protein level). Hardly detectable in the colon (at protein level). Highly expressed in the lung epithelium during methicillin-resistant S.aureus infection and allergic airway inflammation (at protein level). Skin injury increases its epidermal expression. Also expressed in the pancreas. Expressed by nocireceptors.

Its subcellular location is the secreted. The protein resides in the cytoplasm. With respect to regulation, lipopolysaccharide inhibits pore-forming activity, explaining why is bactericidal for Gram-positive but not Gram-negative bacteria. In terms of biological role, bactericidal C-type lectin which acts exclusively against Gram-positive bacteria and mediates bacterial killing by binding to surface-exposed carbohydrate moieties of peptidoglycan. Restricts bacterial colonization of the intestinal epithelial surface and consequently limits activation of adaptive immune responses by the microbiota. Functionally, acts as a hormone in response to different stimuli like anti-inflammatory signals, such as IL17A, or gut microbiome. Is secreted by different cell types to activate its receptor EXTL3 and induce cell specific signaling pathways. Induced by IL17A in keratinocytes, regulates keratinocyte proliferation and differentiation after skin injury. In parallel, inhibits skin inflammation through the inhibition of inflammatory cytokines such as IL6 and TNF. Induced by IL22 in lung epithelial cells, inhibits cytokine production and regulates allergic airway inflammation. Induced in small intestine by inulin-enriched diet and Lactobacillus gasseri enriched microbiome, plays a role in the improvement of gut barrier function, the regulation of energy balance and glucose levels. Modulates microbiota composition in duodenal contents. Produced by nociceptor in response to endotoxins, prevents endotoxic death by targeting kynurenine pathway in microglia. Has bacteriostatic activity. Its function is as follows. Has bactericidal activity against L.monocytogenes and methicillin-resistant S.aureus. The protein is Regenerating islet-derived protein 3-gamma of Mus musculus (Mouse).